A 312-amino-acid polypeptide reads, in one-letter code: MSPAAILSDVPRVLLLSPPSLSSNPDKLAELLNQYDKNTRDLQMIDRLAAGLVSLPESTYNLVLLLTDIDGTSTESERLVGRDVLQQIARTLQPGGIMKYHDGLSAMIKEPARTEAILSGLIANDKGELVKPVFEEQSVLLPFSINRSQKSIKGININKSDQQPAILQKNIVTLTNNTNDIFNGLEGDDDELIDEDELINEDELERPIIQPPECRPKAGKRRRACKDCTCGLAQKLEAEDKRQRANADEKLSALKLNSGEIAEVDFTIQGKTGSCGNCSLGDAFRCDGCPYIGLPPFKPGEEVKLFDNDVQL.

Residues 7–139 are N-terminal SAM-like domain; that stretch reads LSDVPRVLLL…VKPVFEEQSV (133 aa). Residues 140–204 are linker; that stretch reads LLPFSINRSQ…EDELINEDEL (65 aa). 4 residues coordinate [2Fe-2S] cluster: C214, C225, C228, and C230. Positions 214 to 230 are fe-S binding site A; it reads CRPKAGKRRRACKDCTC. [4Fe-4S] cluster-binding residues include C275, C278, C286, and C289. 2 consecutive short sequence motifs (cx2C motif) follow at residues 275-278 and 286-289; these read CGNC and CDGC. Positions 275–289 are fe-S binding site B; the sequence is CGNCSLGDAFRCDGC.

Belongs to the anamorsin family. Monomer. Interacts with TAH18. Interacts with MIA40. Requires [2Fe-2S] cluster as cofactor. It depends on [4Fe-4S] cluster as a cofactor.

The protein localises to the cytoplasm. Its subcellular location is the mitochondrion intermembrane space. In terms of biological role, component of the cytosolic iron-sulfur (Fe-S) protein assembly (CIA) machinery required for the maturation of extramitochondrial Fe-S proteins. Part of an electron transfer chain functioning in an early step of cytosolic Fe-S biogenesis, facilitating the de novo assembly of a [4Fe-4S] cluster on the scaffold complex CFD1-NBP35. Electrons are transferred to DRE2 from NADPH via the FAD- and FMN-containing protein TAH18. TAH18-DRE2 are also required for the assembly of the diferric tyrosyl radical cofactor of ribonucleotide reductase (RNR), probably by providing electrons for reduction during radical cofactor maturation in the catalytic small subunit RNR2. This chain is Fe-S cluster assembly protein DRE2, found in Arthroderma otae (strain ATCC MYA-4605 / CBS 113480) (Microsporum canis).